A 350-amino-acid chain; its full sequence is Protein memo-1 homolog (350 aa).

It belongs to the MEMO1 family. In terms of assembly, interacts with rho-1. In terms of tissue distribution, expressed in neuronal and non-neuronal cells in the head and tail, pharyngeal cells, spermatheca, distal tip cells, anchor cell and the intestine.

Functionally, plays a role in the oxidative stress response and the maintenance of longevity by regulating the interaction between GTPase rho-1 and oxidase bli-3. In turn, this serves to modulate bli-3 activity and the control of reactive oxygen species production. May control cell migration by relaying extracellular chemotactic signals to the microtubule cytoskeleton. The sequence is that of Protein memo-1 homolog from Caenorhabditis elegans.